Reading from the N-terminus, the 301-residue chain is MSLAGSSSSALHLDFPASTGSGVMHSRSVTGVHVHPVALFSILDHYLRRNDGQHRVIGTLLGTRTESEIEIKNCFAVPHLEDAEEGQVQVDMEYHRSMYELCQKVRPDEVIVGWYATSPELNTYSALIQDFYSRETAPHQAVHLTMDTTIDGSKPSGLGIKSYISSPLGATPKAENCVFLPLPTNLLHSTPEHSSLSLLASQNISSPLTDLDALAVSLKQVQSQLDRVLTYVRAVISGEKEGDKAVGRFLNDTISVVPAGLDDNKLETLFNAHLQDVLMVSYLANVVRAQAEVSSRLTLLT.

An MPN domain is found at 32 to 169 (VHVHPVALFS…IKSYISSPLG (138 aa)).

This sequence belongs to the eIF-3 subunit F family. As to quaternary structure, component of the eukaryotic translation initiation factor 3 (eIF-3) complex.

It is found in the cytoplasm. Its function is as follows. Component of the eukaryotic translation initiation factor 3 (eIF-3) complex, which is involved in protein synthesis of a specialized repertoire of mRNAs and, together with other initiation factors, stimulates binding of mRNA and methionyl-tRNAi to the 40S ribosome. The eIF-3 complex specifically targets and initiates translation of a subset of mRNAs involved in cell proliferation. This Mycosarcoma maydis (Corn smut fungus) protein is Eukaryotic translation initiation factor 3 subunit F.